The primary structure comprises 266 residues: Probable septum site-determining protein MinC (266 aa).

The segment covering 1 to 21 has biased composition (low complexity); that stretch reads MSEAESTPVEEPVVESTEGSE. Residues 1 to 28 are disordered; sequence MSEAESTPVEEPVVESTEGSEAIPEVEQ.

It belongs to the MinC family. Interacts with MinD and FtsZ.

Cell division inhibitor that blocks the formation of polar Z ring septums. Rapidly oscillates between the poles of the cell to destabilize FtsZ filaments that have formed before they mature into polar Z rings. Prevents FtsZ polymerization. This is Probable septum site-determining protein MinC from Thermosynechococcus vestitus (strain NIES-2133 / IAM M-273 / BP-1).